Here is a 124-residue protein sequence, read N- to C-terminus: MDTMGRHVISELWGCDFDKLNDMEFIEKTFVDAALKSGAEIREVAFHKFAPQGVSGVVIISESHLTIHSFPEHGYASIDVYTCGHLDPTIAADYIAEALGAQTRETIELPRGMGPIEIKQAKAL.

Ser-63 (schiff-base intermediate with substrate; via pyruvic acid) is an active-site residue. Pyruvic acid (Ser); by autocatalysis is present on Ser-63. Catalysis depends on His-68, which acts as the Proton acceptor; for processing activity. The Proton donor; for catalytic activity role is filled by Cys-83.

Belongs to the prokaryotic AdoMetDC family. Type 1 subfamily. In terms of assembly, heterotetramer of two alpha and two beta chains arranged as a dimer of alpha/beta heterodimers. It depends on pyruvate as a cofactor. In terms of processing, is synthesized initially as an inactive proenzyme. Formation of the active enzyme involves a self-maturation process in which the active site pyruvoyl group is generated from an internal serine residue via an autocatalytic post-translational modification. Two non-identical subunits are generated from the proenzyme in this reaction, and the pyruvate is formed at the N-terminus of the alpha chain, which is derived from the carboxyl end of the proenzyme. The post-translation cleavage follows an unusual pathway, termed non-hydrolytic serinolysis, in which the side chain hydroxyl group of the serine supplies its oxygen atom to form the C-terminus of the beta chain, while the remainder of the serine residue undergoes an oxidative deamination to produce ammonia and the pyruvoyl group blocking the N-terminus of the alpha chain.

It carries out the reaction S-adenosyl-L-methionine + H(+) = S-adenosyl 3-(methylsulfanyl)propylamine + CO2. The protein operates within amine and polyamine biosynthesis; S-adenosylmethioninamine biosynthesis; S-adenosylmethioninamine from S-adenosyl-L-methionine: step 1/1. Its function is as follows. Catalyzes the decarboxylation of S-adenosylmethionine to S-adenosylmethioninamine (dcAdoMet), the propylamine donor required for the synthesis of the polyamines spermine and spermidine from the diamine putrescine. This is S-adenosylmethionine decarboxylase proenzyme from Anoxybacillus flavithermus (strain DSM 21510 / WK1).